Reading from the N-terminus, the 483-residue chain is 2-methylcitrate dehydratase (483 aa).

Belongs to the PrpD family. As to quaternary structure, monomer.

The catalysed reaction is (2S,3S)-2-methylcitrate = 2-methyl-cis-aconitate + H2O. It carries out the reaction citrate = D-threo-isocitrate. It functions in the pathway organic acid metabolism; propanoate degradation. The protein operates within carbohydrate metabolism; tricarboxylic acid cycle; isocitrate from oxaloacetate: step 2/2. Involved in the catabolism of short chain fatty acids (SCFA) via the tricarboxylic acid (TCA)(acetyl degradation route) and via the 2-methylcitrate cycle I (propionate degradation route). Catalyzes the dehydration of 2-methylcitrate (2-MC) to yield the cis isomer of 2-methyl-aconitate. It is also able to catalyze the dehydration of citrate and the hydration of cis-aconitate at a lower rate. Due to its broad substrate specificity, it seems to be responsible for the residual aconitase activity of the acnAB-null mutant. In Escherichia coli (strain K12), this protein is 2-methylcitrate dehydratase.